A 69-amino-acid polypeptide reads, in one-letter code: Putative membrane protein insertion efficiency factor (69 aa).

Belongs to the UPF0161 family.

It localises to the cell inner membrane. In terms of biological role, could be involved in insertion of integral membrane proteins into the membrane. In Novosphingobium aromaticivorans (strain ATCC 700278 / DSM 12444 / CCUG 56034 / CIP 105152 / NBRC 16084 / F199), this protein is Putative membrane protein insertion efficiency factor.